The sequence spans 514 residues: tRNA-2-methylthio-N(6)-dimethylallyladenosine synthase (514 aa).

Residues 68–186 form the MTTase N-terminal domain; it reads RTFLIKTYGC…LPEILEEAYL (119 aa). [4Fe-4S] cluster-binding residues include C77, C113, C147, C223, C227, and C230. The Radical SAM core domain maps to 209 to 439; it reads REGSTKAWVN…NKKVGHYSEK (231 aa). The 64-residue stretch at 442 to 505 folds into the TRAM domain; that stretch reads NQYEGKTVTV…QYSLNGTFKE (64 aa).

It belongs to the methylthiotransferase family. MiaB subfamily. As to quaternary structure, monomer. [4Fe-4S] cluster serves as cofactor.

The protein resides in the cytoplasm. It carries out the reaction N(6)-dimethylallyladenosine(37) in tRNA + (sulfur carrier)-SH + AH2 + 2 S-adenosyl-L-methionine = 2-methylsulfanyl-N(6)-dimethylallyladenosine(37) in tRNA + (sulfur carrier)-H + 5'-deoxyadenosine + L-methionine + A + S-adenosyl-L-homocysteine + 2 H(+). Catalyzes the methylthiolation of N6-(dimethylallyl)adenosine (i(6)A), leading to the formation of 2-methylthio-N6-(dimethylallyl)adenosine (ms(2)i(6)A) at position 37 in tRNAs that read codons beginning with uridine. This chain is tRNA-2-methylthio-N(6)-dimethylallyladenosine synthase, found in Staphylococcus haemolyticus (strain JCSC1435).